Reading from the N-terminus, the 311-residue chain is tRNA-cytidine(32) 2-sulfurtransferase (311 aa).

A PP-loop motif motif is present at residues 47-52 (SGGKDS). Residues Cys122, Cys125, and Cys213 each coordinate [4Fe-4S] cluster.

It belongs to the TtcA family. As to quaternary structure, homodimer. It depends on Mg(2+) as a cofactor. [4Fe-4S] cluster is required as a cofactor.

It localises to the cytoplasm. It catalyses the reaction cytidine(32) in tRNA + S-sulfanyl-L-cysteinyl-[cysteine desulfurase] + AH2 + ATP = 2-thiocytidine(32) in tRNA + L-cysteinyl-[cysteine desulfurase] + A + AMP + diphosphate + H(+). The protein operates within tRNA modification. Its function is as follows. Catalyzes the ATP-dependent 2-thiolation of cytidine in position 32 of tRNA, to form 2-thiocytidine (s(2)C32). The sulfur atoms are provided by the cysteine/cysteine desulfurase (IscS) system. The protein is tRNA-cytidine(32) 2-sulfurtransferase of Pectobacterium carotovorum subsp. carotovorum (strain PC1).